Reading from the N-terminus, the 30-residue chain is Trypsin inhibitor 3 (30 aa).

Intrachain disulfides connect C4/C21, C11/C23, and C17/C29.

The protein belongs to the protease inhibitor I7 (squash-type serine protease inhibitor) family.

It localises to the secreted. Its function is as follows. Inhibits trypsin. This Momordica charantia (Bitter gourd) protein is Trypsin inhibitor 3.